The following is a 346-amino-acid chain: Hydroxyproline O-galactosyltransferase HPGT3 (346 aa).

Over residues 1-10 (MESLPTTVPS) the composition is skewed to polar residues. The interval 1 to 21 (MESLPTTVPSKSERRARSSKF) is disordered. The Cytoplasmic portion of the chain corresponds to 1 to 28 (MESLPTTVPSKSERRARSSKFSQSSSKP). The chain crosses the membrane as a helical; Signal-anchor for type II membrane protein span at residues 29–45 (SVIMAFFSCVAWLYVAG). Topologically, residues 46–346 (RLWQDAENRV…IRQDKVCSVA (301 aa)) are lumenal.

This sequence belongs to the glycosyltransferase 31 family. Requires Mn(2+) as cofactor. Expressed in roots, rosette leaves, cauline leaves, stems, flowers and siliques.

The protein localises to the golgi apparatus membrane. It participates in protein modification; protein glycosylation. In terms of biological role, possesses hydroxyproline O-galactosyltransferase activity. Transfers galactose from UDP-galactose to hydroxyproline residues in the arabinogalactan proteins (AGPs). Is specific for AGPs containing non-contiguous peptidyl hydroxyproline residues. The addition of galactose onto the peptidyl hydroxyproline residues in AGP core proteins represents the first committed step in arabinogalactan polysaccharide addition. AGP glycans play essential roles in both vegetative and reproductive plant growth. The polypeptide is Hydroxyproline O-galactosyltransferase HPGT3 (Arabidopsis thaliana (Mouse-ear cress)).